A 1346-amino-acid polypeptide reads, in one-letter code: Proline-rich protein 36 (1346 aa).

Disordered stretches follow at residues 1–403, 426–512, 537–606, 633–679, 711–1155, and 1168–1240; these read MDNK…TQLI, SVSS…QATP, PLTT…PSPL, PRQT…VSPL, LETQ…AELA, and PPLA…RSPK. Residues 10–26 are compositionally biased toward low complexity; sequence AGAAARTPAARAPGLLT. The span at 27-40 shows a compositional bias: pro residues; the sequence is PRPPGSPRPPPPVT. 2 stretches are compositionally biased toward low complexity: residues 41 to 55 and 86 to 97; these read PAAL…AVGR and SSRNPASRPPAS. A compositionally biased stretch (basic and acidic residues) spans 137 to 152; that stretch reads SAEETVARGKATEAPK. The segment covering 165–177 has biased composition (low complexity); the sequence is SGPTPGTPSPAMA. The segment covering 191–203 has biased composition (pro residues); it reads RPAPSARPRPPTE. A compositionally biased stretch (polar residues) spans 208–220; that stretch reads SVSSASEHSTTEP. 2 stretches are compositionally biased toward low complexity: residues 235–255 and 293–312; these read QRPA…PARS and APAL…PSGT. 3 stretches are compositionally biased toward pro residues: residues 329–343, 371–380, and 387–397; these read ATLP…PPPA, PLAPPSPSAP, and PSPPATPPSQV. Over residues 426-464 the composition is skewed to low complexity; it reads SVSSPLQSMPPTQANPALPSLPTLLSPLATPPLSAMSPL. Positions 494 to 506 are enriched in pro residues; that stretch reads TPPPQASPSPSPP. Residues 546-558 show a composition bias toward low complexity; the sequence is PPLVSPSLLASPP. Over residues 559 to 578 the composition is skewed to pro residues; sequence LQAPPHPQAPPSMTTPPMQA. A compositionally biased stretch (polar residues) spans 633-647; that stretch reads PRQTQASLISPSRPA. Positions 648–657 are enriched in pro residues; it reads STPPDSPPLQ. Low complexity predominate over residues 658–679; it reads APLSLPASPPLQTSLSPAVSPL. Over residues 724–733 the composition is skewed to polar residues; it reads TPPASLTTPP. 2 stretches are compositionally biased toward pro residues: residues 781–821 and 829–865; these read ETPP…PALA and PSPP…PPLS. A compositionally biased stretch (low complexity) spans 866 to 875; sequence PLATPSPQAP. Pro residues-rich tracts occupy residues 887–917, 926–997, and 1004–1015; these read FSPP…PSQA, LQVP…PPAS, and AKPPPQAPPALA. Low complexity-rich tracts occupy residues 1029 to 1046, 1137 to 1146, and 1224 to 1239; these read FPGQ…MSPL, DSGPEGGAAA, and GKAA…SRSP. Ser1310 bears the Phosphoserine mark.

This chain is Proline-rich protein 36, found in Homo sapiens (Human).